A 699-amino-acid polypeptide reads, in one-letter code: tRNA(Met) cytidine acetyltransferase TmcA (699 aa).

ATP-binding positions include glutamine 178, 200–209 (GRGKSTLAGM), and arginine 322. The region spanning 408–547 (MHIASAQVAG…SGCYSAMAIL (140 aa)) is the N-acetyltransferase domain. Acetyl-CoA is bound by residues 475 to 477 (IAV) and 482 to 488 (RRQGIGR).

This sequence belongs to the RNA cytidine acetyltransferase family. TmcA subfamily.

The protein localises to the cytoplasm. It carries out the reaction cytidine(34) in elongator tRNA(Met) + acetyl-CoA + ATP + H2O = N(4)-acetylcytidine(34) in elongator tRNA(Met) + ADP + phosphate + CoA + H(+). Its function is as follows. Catalyzes the formation of N(4)-acetylcytidine (ac(4)C) at the wobble position of tRNA(Met), by using acetyl-CoA as an acetyl donor and ATP (or GTP). This chain is tRNA(Met) cytidine acetyltransferase TmcA, found in Pectobacterium atrosepticum (strain SCRI 1043 / ATCC BAA-672) (Erwinia carotovora subsp. atroseptica).